The chain runs to 97 residues: Small ribosomal subunit protein uS19 (97 aa).

The protein belongs to the universal ribosomal protein uS19 family.

Its function is as follows. Protein S19 forms a complex with S13 that binds strongly to the 16S ribosomal RNA. The sequence is that of Small ribosomal subunit protein uS19 from Pelagibacter ubique (strain HTCC1062).